The chain runs to 433 residues: 5-methylthioadenosine/S-adenosylhomocysteine deaminase (433 aa).

Zn(2+) contacts are provided by histidine 67 and histidine 69. Positions 96, 148, and 186 each coordinate substrate. Histidine 213 provides a ligand contact to Zn(2+). Residues glutamate 216 and aspartate 301 each contribute to the substrate site. A Zn(2+)-binding site is contributed by aspartate 301.

The protein belongs to the metallo-dependent hydrolases superfamily. MTA/SAH deaminase family. Zn(2+) is required as a cofactor.

The catalysed reaction is S-adenosyl-L-homocysteine + H2O + H(+) = S-inosyl-L-homocysteine + NH4(+). The enzyme catalyses S-methyl-5'-thioadenosine + H2O + H(+) = S-methyl-5'-thioinosine + NH4(+). Functionally, catalyzes the deamination of 5-methylthioadenosine and S-adenosyl-L-homocysteine into 5-methylthioinosine and S-inosyl-L-homocysteine, respectively. Is also able to deaminate adenosine. This chain is 5-methylthioadenosine/S-adenosylhomocysteine deaminase, found in Desulforamulus reducens (strain ATCC BAA-1160 / DSM 100696 / MI-1) (Desulfotomaculum reducens).